The following is a 629-amino-acid chain: MHFHERFDVIVVGGGHAGTEAALAAARMGSKTLLLTHNLDTLGQMSCNPAIGGIGKGHLVKEIDALGGAMAIATDYAGIQFRTLNSSKGPAVRATRAQADRALYRQKIQNILQNQANLRIFQQAVDDLVVDNDRVVGVVTQMGLAFEAPAVVLTAGTFLSGKIHIGLENYSGGRAGDPPSIALAHRLRELPIRVGRLKTGTPPRIDANTIDFTQMTEQKGDTPLPVMSFMGDVSHHPKQISCWITHTNEKTHDIIRGGLDRSPMYSGVIEGIGPRYCPSIEDKIHRFSDKSSHQIFIEPEGLNTNEIYPNGISTSLPFDVQLNLVRSIQGMENAEIVRPGYAIEYDYFDPRDLKNSLETKTINGLFFAGQINGTTGYEEAGAQGLLAGMNAALQVQGKEAWCPRRDEAYIGVLVDDLSTLGTKEPYRMFTSRAEYRLLLREDNADLRLTAKGRELGLVDDARWASFSEKMESIELELQRLRSQWIHPNSPLVPVLNPHLNTPISREASFEELLRRPEMDYSKLMQIEGFGPGLADPLAAEQVQIQVKYSGYIQRQQEEINKAVRNENTGLPLNLDYKEVPGLSNEVIAKLNSHKPETIGQASRISGITPAAISILLVHLKKRGLLRKSA.

FAD contacts are provided by residues 13–18 (GGGHAG), V125, and S180. Residue 273 to 287 (GPRYCPSIEDKIHRF) coordinates NAD(+). Q370 contacts FAD.

The protein belongs to the MnmG family. Homodimer. Heterotetramer of two MnmE and two MnmG subunits. It depends on FAD as a cofactor.

The protein localises to the cytoplasm. In terms of biological role, NAD-binding protein involved in the addition of a carboxymethylaminomethyl (cmnm) group at the wobble position (U34) of certain tRNAs, forming tRNA-cmnm(5)s(2)U34. This chain is tRNA uridine 5-carboxymethylaminomethyl modification enzyme MnmG, found in Shewanella sp. (strain ANA-3).